The following is a 1986-amino-acid chain: Protein Shroom3 (1986 aa).

The segment at 1-21 is disordered; it reads MKTPENLEEPSATPNPSRTPT. Residues 24–109 enclose the PDZ domain; it reads FVYLEALLEG…TLRLVVRRDV (86 aa). 5 disordered regions span residues 152–199, 211–239, 265–285, 342–463, and 564–1055; these read CSEP…SSTS, RSPD…LLSP, TSSS…RSGS, QGCA…QPLL, and NEDS…RRIF. Phosphoserine is present on S212. Polar residues-rich tracts occupy residues 357-376 and 415-425; these read PSPS…TDNL and PQTNSSGSQKT. The span at 430–440 shows a compositional bias: basic and acidic residues; sequence DQLHTVPERSP. Phosphoserine is present on residues S439 and S443. Residues 595–607 show a composition bias toward polar residues; that stretch reads ACSNHHSLSSPQA. Residues 630–645 are compositionally biased toward basic and acidic residues; it reads QEDHNANLRQKVEREG. Residues 653–677 are compositionally biased toward polar residues; the sequence is NSGRTRSAFSSLQNIPESLRRQSNV. The segment covering 747–761 has biased composition (low complexity); that stretch reads SGASQRRLSSSSSAA. Over residues 774-785 the composition is skewed to basic and acidic residues; the sequence is KVSRIEEREQGR. Composition is skewed to low complexity over residues 796-814 and 865-874; these read YGPG…TSSS and DGRGPPARGG. S888 is modified (phosphoserine). Residues 895-908 are compositionally biased toward basic and acidic residues; sequence EAEREASWSEDRPG. Position 909 is a phosphothreonine (T909). Phosphoserine occurs at positions 912 and 969. One can recognise an ASD1 domain in the interval 927–1023; it reads IKDAQSRVLG…SEPEKMNEVG (97 aa). The span at 1004-1020 shows a compositional bias: basic and acidic residues; sequence LTVEQKKRSYSEPEKMN. S1063 and S1066 each carry phosphoserine. 4 disordered regions span residues 1083–1102, 1107–1223, 1304–1425, and 1446–1654; these read YIQR…PEAG, AQSA…AEDL, ATVA…PPWV, and ANLK…KTSE. Low complexity predominate over residues 1114–1127; sequence AGPAAPDGPGLASA. Basic and acidic residues predominate over residues 1134–1146; the sequence is REPEALPRKEHTH. Residues W1175, V1179, and S1219 each carry the phosphoserine modification. Positions 1307 to 1318 are enriched in low complexity; that stretch reads ASSAPPESSGAA. Phosphoserine is present on residues S1350 and S1354. Polar residues predominate over residues 1366–1399; that stretch reads YRSQLAMDQQTGQQPPSSPASAVTQPTSPRSPEL. Over residues 1455-1469 the composition is skewed to low complexity; the sequence is PSRPSSCSTSDPDTP. The span at 1513–1524 shows a compositional bias: pro residues; sequence LPPPPPPSPPSE. Over residues 1581–1630 the composition is skewed to polar residues; that stretch reads EGSQIMTATPPQTSAKGSEAESNTPSSASAQPQLNGSPGKQLCPSQTRNL. Over residues 1634–1654 the composition is skewed to basic and acidic residues; sequence PVERTQDLGKKTHAEPQKTSE. The region spanning 1659–1947 is the ASD2 domain; sequence EALAKEIVHQ…QVRCLLESLP (289 aa). A coiled-coil region spans residues 1844 to 1890; sequence RLARVENVLRGLGEDASKEERSSLNEKRKVLAGQHEDARELKENLDR.

The protein belongs to the shroom family. As to quaternary structure, interacts with F-actin. Interacts with ROCK1.

It localises to the cell junction. It is found in the adherens junction. The protein localises to the cytoplasm. Its subcellular location is the cytoskeleton. The protein resides in the apical cell membrane. Its function is as follows. Controls cell shape changes in the neuroepithelium during neural tube closure. Induces apical constriction in epithelial cells by promoting the apical accumulation of F-actin and myosin II, and probably by bundling stress fibers. Induces apicobasal cell elongation by redistributing gamma-tubulin and directing the assembly of robust apicobasal microtubule arrays. The polypeptide is Protein Shroom3 (Shroom3) (Mus musculus (Mouse)).